Consider the following 513-residue polypeptide: MAQSADHVLDHLELFRGPEYQQMLADKKMFENPRDPAEVERIRAVTKTPEYREKNFAEALAVNPAKACQPLGAVFVSVGFEGTLPFVHGSQGCVAYYRSHLSRHFKEPSSCVSSSMTEDAAVFGGLNNMIDGLANSYNMYKPKMICSTTCMAEVIGDDLNAFIKTSKEKGSVRRSSTPFAHTPAFVGSHVTGYDNALKGILEHFWNGKAGTAPKLERKPNEAINIIGGFDGNTVGNLREIKRILALMGIKHTILADNSEVFDTPTDGEFRMYDGGTHVEDTANAIHAKATISMQQWCTEKTLPFVSEHGQDVVSFNYPVGVSATDDLLVALSRISGKEIPEQLARERGRLVDAIADSSAHIHGKKFAIYGDPDLCYGLAAFLLELGAEPTHVLSTNGNNVAGENATLFAGSPFGELPAYPGRDLWHMRSLLFTEPVDFLIGNTHGKYLERDTGTPLIRIGFPIFDRHHHHRFPVWGYQGGLNVLVKILDKIFDEIDKKTSVLGKTDYSFDIIR.

3 residues coordinate [8Fe-7S] cluster: C68, C93, and C150.

Belongs to the NifD/NifK/NifE/NifN family. As to quaternary structure, tetramer of two alpha and two beta chains. Forms complex with the iron protein (nitrogenase component 2). [8Fe-7S] cluster serves as cofactor.

It catalyses the reaction N2 + 8 reduced [2Fe-2S]-[ferredoxin] + 16 ATP + 16 H2O = H2 + 8 oxidized [2Fe-2S]-[ferredoxin] + 2 NH4(+) + 16 ADP + 16 phosphate + 6 H(+). Its function is as follows. This molybdenum-iron protein is part of the nitrogenase complex that catalyzes the key enzymatic reactions in nitrogen fixation. This chain is Nitrogenase molybdenum-iron protein beta chain (nifK), found in Bradyrhizobium sp. (strain ANU 289).